The primary structure comprises 447 residues: UPF0210 protein LEUM_1180 (447 aa).

This sequence belongs to the UPF0210 family. As to quaternary structure, homodimer.

This Leuconostoc mesenteroides subsp. mesenteroides (strain ATCC 8293 / DSM 20343 / BCRC 11652 / CCM 1803 / JCM 6124 / NCDO 523 / NBRC 100496 / NCIMB 8023 / NCTC 12954 / NRRL B-1118 / 37Y) protein is UPF0210 protein LEUM_1180.